Consider the following 509-residue polypeptide: Dihydrolipoyl dehydrogenase, mitochondrial (509 aa).

The N-terminal 35 residues, 1-35 (MQSWSRVYCSLAKKGHFNRLSHGLQGASSVPLRTY), are a transit peptide targeting the mitochondrion. Lys66 carries the N6-acetyllysine; alternate modification. N6-succinyllysine; alternate is present on Lys66. FAD-binding positions include 71–80 (EKNETLGGTC) and Lys89. Cys80 and Cys85 are oxidised to a cystine. 4 positions are modified to N6-acetyllysine; alternate: Lys104, Lys122, Lys132, and Lys143. N6-succinyllysine; alternate is present on residues Lys104, Lys122, Lys132, and Lys143. FAD is bound at residue Gly154. Residue Lys159 is modified to N6-succinyllysine. 183–185 (TGS) contributes to the FAD binding site. Residues 220 to 227 (GAGVIGVE) and Glu243 contribute to the NAD(+) site. Residues Lys273 and Lys277 each carry the N6-succinyllysine modification. Val278 is an NAD(+) binding site. Residues Ser285 and Ser297 each carry the phosphoserine modification. An NAD(+)-binding site is contributed by Gly314. Lys346 is modified (N6-acetyllysine). FAD contacts are provided by residues Asp355 and 361 to 364 (MLAH). Lys410 carries the post-translational modification N6-acetyllysine; alternate. Lys410 carries the N6-succinyllysine; alternate modification. N6-acetyllysine is present on residues Lys417 and Lys420. N6-succinyllysine is present on Lys430. His487 (proton acceptor) is an active-site residue. At Ser502 the chain carries Phosphoserine. N6-acetyllysine; alternate is present on Lys505. Lys505 carries the post-translational modification N6-succinyllysine; alternate.

The protein belongs to the class-I pyridine nucleotide-disulfide oxidoreductase family. Homodimer. Part of the multimeric pyruvate dehydrogenase complex that contains multiple copies of pyruvate dehydrogenase (subunits PDHA (PDHA1 or PDHA2) and PDHB, E1), dihydrolipoamide acetyltransferase (DLAT, E2) and lipoamide dehydrogenase (DLD, E3). These subunits are bound to an inner core composed of about 48 DLAT and 12 PDHX molecules (by non covalent bonds). The 2-oxoglutarate dehydrogenase complex is composed of OGDH (2-oxoglutarate dehydrogenase; E1), DLST (dihydrolipoamide succinyltransferase; E2), DLD (dihydrolipoamide dehydrogenase; E3) and the assembly factor KGD4. It contains multiple copies of the three enzymatic components (E1, E2 and E3). In the nucleus, the 2-oxoglutarate dehydrogenase complex associates with KAT2A. Interacts with PDHX. FAD serves as cofactor. Tyrosine phosphorylated.

The protein resides in the mitochondrion matrix. It localises to the nucleus. The protein localises to the cell projection. Its subcellular location is the cilium. It is found in the flagellum. The protein resides in the cytoplasmic vesicle. It localises to the secretory vesicle. The protein localises to the acrosome. The catalysed reaction is N(6)-[(R)-dihydrolipoyl]-L-lysyl-[protein] + NAD(+) = N(6)-[(R)-lipoyl]-L-lysyl-[protein] + NADH + H(+). Functionally, lipoamide dehydrogenase is a component of the glycine cleavage system as well as an E3 component of three alpha-ketoacid dehydrogenase complexes (pyruvate-, alpha-ketoglutarate-, and branched-chain amino acid-dehydrogenase complex). The 2-oxoglutarate dehydrogenase complex is mainly active in the mitochondrion. A fraction of the 2-oxoglutarate dehydrogenase complex also localizes in the nucleus and is required for lysine succinylation of histones: associates with KAT2A on chromatin and provides succinyl-CoA to histone succinyltransferase KAT2A. In monomeric form may have additional moonlighting function as serine protease. Involved in the hyperactivation of spermatazoa during capacitation and in the spermatazoal acrosome reaction. This is Dihydrolipoyl dehydrogenase, mitochondrial (Dld) from Rattus norvegicus (Rat).